The chain runs to 251 residues: Segregation and condensation protein A (251 aa).

Belongs to the ScpA family. As to quaternary structure, component of a cohesin-like complex composed of ScpA, ScpB and the Smc homodimer, in which ScpA and ScpB bind to the head domain of Smc. The presence of the three proteins is required for the association of the complex with DNA.

Its subcellular location is the cytoplasm. Participates in chromosomal partition during cell division. May act via the formation of a condensin-like complex containing Smc and ScpB that pull DNA away from mid-cell into both cell halves. The chain is Segregation and condensation protein A from Bacillus velezensis (strain DSM 23117 / BGSC 10A6 / LMG 26770 / FZB42) (Bacillus amyloliquefaciens subsp. plantarum).